The chain runs to 274 residues: Pantothenate synthetase (274 aa).

Position 26 to 33 (26 to 33 (MGNLHAGH)) interacts with ATP. His-33 acts as the Proton donor in catalysis. Gln-57 lines the (R)-pantoate pocket. Gln-57 is a binding site for beta-alanine. 143 to 146 (GKKD) is a binding site for ATP. Position 149 (Gln-149) interacts with (R)-pantoate. ATP contacts are provided by residues Val-172 and 180–183 (LSSR).

Belongs to the pantothenate synthetase family. In terms of assembly, homodimer.

Its subcellular location is the cytoplasm. The enzyme catalyses (R)-pantoate + beta-alanine + ATP = (R)-pantothenate + AMP + diphosphate + H(+). Its pathway is cofactor biosynthesis; (R)-pantothenate biosynthesis; (R)-pantothenate from (R)-pantoate and beta-alanine: step 1/1. Functionally, catalyzes the condensation of pantoate with beta-alanine in an ATP-dependent reaction via a pantoyl-adenylate intermediate. The chain is Pantothenate synthetase from Dechloromonas aromatica (strain RCB).